The sequence spans 740 residues: ATP-dependent DNA helicase Hel308 (740 aa).

ATP-binding positions include Gln28 and 46 to 53 (IPTASGKT). The 172-residue stretch at 33-204 (RQGLLDGKNL…WMDAALVQSE (172 aa)) folds into the Helicase ATP-binding domain. The DEAH box motif lies at 149–152 (DEVH). One can recognise a Helicase C-terminal domain in the interval 236–436 (EVNSLVADTL…EPAMRAHALS (201 aa)). The tract at residues 716–740 (VDHTPPETEEQPQVSGQSTLFSFDG) is disordered. Positions 726–740 (QPQVSGQSTLFSFDG) are enriched in polar residues.

The protein belongs to the helicase family. Hel308 subfamily. Monomer.

It catalyses the reaction Couples ATP hydrolysis with the unwinding of duplex DNA by translocating in the 3'-5' direction.. The enzyme catalyses ATP + H2O = ADP + phosphate + H(+). In terms of biological role, DNA-dependent ATPase and 3'-5' DNA helicase that may be involved in repair of stalled replication forks. The chain is ATP-dependent DNA helicase Hel308 from Methanocella arvoryzae (strain DSM 22066 / NBRC 105507 / MRE50).